A 75-amino-acid polypeptide reads, in one-letter code: Putative membrane protein insertion efficiency factor (75 aa).

It belongs to the UPF0161 family.

The protein localises to the cell membrane. Could be involved in insertion of integral membrane proteins into the membrane. This Bacillus velezensis (strain DSM 23117 / BGSC 10A6 / LMG 26770 / FZB42) (Bacillus amyloliquefaciens subsp. plantarum) protein is Putative membrane protein insertion efficiency factor.